Reading from the N-terminus, the 147-residue chain is Small ribosomal subunit protein uS12 (147 aa).

Belongs to the universal ribosomal protein uS12 family. Part of the 30S ribosomal subunit.

Functionally, with S4 and S5 plays an important role in translational accuracy. Located at the interface of the 30S and 50S subunits. In Thermococcus celer, this protein is Small ribosomal subunit protein uS12.